Reading from the N-terminus, the 693-residue chain is Polyribonucleotide nucleotidyltransferase (693 aa).

Mg(2+) contacts are provided by aspartate 485 and aspartate 491. The KH domain occupies proline 552–isoleucine 611. The region spanning glycine 621–lysine 689 is the S1 motif domain.

This sequence belongs to the polyribonucleotide nucleotidyltransferase family. Requires Mg(2+) as cofactor.

It is found in the cytoplasm. The catalysed reaction is RNA(n+1) + phosphate = RNA(n) + a ribonucleoside 5'-diphosphate. Involved in mRNA degradation. Catalyzes the phosphorolysis of single-stranded polyribonucleotides processively in the 3'- to 5'-direction. This Chlamydia muridarum (strain MoPn / Nigg) protein is Polyribonucleotide nucleotidyltransferase.